The chain runs to 353 residues: Guanine nucleotide-binding protein subunit alpha (353 aa).

The disordered stretch occupies residues 1–25 (MGCGMSTEDKEGKARNEEIENQLKR). Gly-2 is lipidated: N-myristoyl glycine. Cys-3 carries the S-palmitoyl cysteine lipid modification. A compositionally biased stretch (basic and acidic residues) spans 7–25 (TEDKEGKARNEEIENQLKR). Positions 32–353 (NEIKMLLLGA…QENLRLCGLI (322 aa)) constitute a G-alpha domain. Positions 35 to 48 (KMLLLGAGESGKST) are G1 motif. GTP is bound by residues Glu-43, Ser-44, Gly-45, Lys-46, Ser-47, Thr-48, Asp-150, Leu-175, Thr-181, Gly-203, Asn-269, Lys-270, Asp-272, and Ala-325. Ser-47 is a binding site for Mg(2+). The segment at 173–181 (DVLRSRVKT) is G2 motif. Mg(2+) is bound at residue Thr-181. The segment at 196–205 (YRMFDVGGQR) is G3 motif. Residues 265 to 272 (ILFLNKID) form a G4 motif region. Residues 323-328 (TCATDT) are G5 motif.

The protein belongs to the G-alpha family. G(q) subfamily. As to quaternary structure, g proteins are composed of 3 units; alpha, beta and gamma. The alpha chain contains the guanine nucleotide binding site. Mg(2+) is required as a cofactor.

Its function is as follows. Guanine nucleotide-binding proteins (G proteins) are involved as modulators or transducers in various transmembrane signaling systems. This chain is Guanine nucleotide-binding protein subunit alpha (CTG1), found in Colletotrichum trifolii.